Reading from the N-terminus, the 491-residue chain is Diacylglycerol O-acyltransferase 1 (491 aa).

The disordered stretch occupies residues 1–60; sequence MGDRGGAGGTRRRRTGSRPSSHGGGGPAAAEEEVRDAAAGPDMGAAGDAPAPAPSKDADD. Residues 1-86 lie on the Cytoplasmic side of the membrane; the sequence is MGDRGGAGGT…SLFSSDSGFN (86 aa). The involved in homomerization stretch occupies residues 1 to 94; the sequence is MGDRGGAGGT…FNNYRGILNW (94 aa). Residues Ser20 and Ser21 each carry the phosphoserine modification. Positions 37-50 are enriched in low complexity; sequence AAAGPDMGAAGDAP. The helical transmembrane segment at 87–121 threads the bilayer; it reads NYRGILNWCVVMLILSNARLFLENLIKYGILVDPI. At 122–133 the chain is on the lumenal side; it reads QVVSLFLKDPYS. The tract at residues 122 to 133 is extracellular loop 1 (EL1); that stretch reads QVVSLFLKDPYS. Residues 134 to 159 traverse the membrane as a helical segment; that stretch reads WPAPCLVIAANVFAVAAFQVEKRLAV. The tract at residues 134–491 is MBOAT fold; that stretch reads WPAPCLVIAA…LNYEAPVAGA (358 aa). The Cytoplasmic segment spans residues 160–164; sequence GALTE. A helical membrane pass occupies residues 165-187; it reads QAGLLLHVANLATILCFPAAVVL. The Lumenal portion of the chain corresponds to 188–194; sequence LVESITP. Residues 195–226 traverse the membrane as a helical segment; sequence VGSLLALMVHTILFLKLFSYRDVNLWCRRARA. The Cytoplasmic portion of the chain corresponds to 227-276; it reads KAASAGKRASSAAAPHTVSYPDNLTYRDLYYFLFAPTLCYELNFPRSPRI. Residues 227–279 are intracellular loop 1 (IL1); sequence KAASAGKRASSAAAPHTVSYPDNLTYRDLYYFLFAPTLCYELNFPRSPRIRKR. Residues 277–311 form a helical membrane-spanning segment; sequence RKRFLLRRILEMLFFTQLQVGLIQQWMVPTIQNSM. Residues 312–318 lie on the Lumenal side of the membrane; sequence KPFKDMD. Residues 319 to 356 form a helical membrane-spanning segment; that stretch reads YSRIIERLLKLAVPNHLIWLIFFYWLFHSCLNAVAELM. At 357-402 the chain is on the cytoplasmic side; sequence QFGDREFYRDWWNSESVTYFWQNWNIPVHKWCIRHFYKPMLRRGSS. The segment at 357–402 is intracellular loop 2 (IL2); sequence QFGDREFYRDWWNSESVTYFWQNWNIPVHKWCIRHFYKPMLRRGSS. Positions 363 to 369 match the FYXDWWN motif motif; the sequence is FYRDWWN. Residues 377-385, Tyr393, and Arg407 each bind an acyl-CoA; that span reads WQNWNIPVH. The amphipathic helix (AH) stretch occupies residues 383–397; it reads PVHKWCIRHFYKPML. The helical transmembrane segment at 403 to 423 threads the bilayer; sequence RWMARIGVFLASAFFHEYLVS. His418 is a catalytic residue. Over 424–431 the chain is Lumenal; the sequence is VPLRMFRL. A helical membrane pass occupies residues 432-450; it reads WAFTGMMAQIPLAWFVGRF. Topologically, residues 451-452 are cytoplasmic; sequence FQ. Residues 453-484 form a helical membrane-spanning segment; that stretch reads GNYGNAAVWLTLIIGQPIAVLMYVHDYYVLNY. Position 480 (Tyr480) interacts with an acyl-CoA. Residues 485–491 lie on the Lumenal side of the membrane; that stretch reads EAPVAGA.

Belongs to the membrane-bound acyltransferase family. Sterol o-acyltransferase subfamily. Homodimer or homotetramer; both forms have similar enzymatic activities.

The protein resides in the endoplasmic reticulum membrane. It carries out the reaction an acyl-CoA + a 1,2-diacyl-sn-glycerol = a triacyl-sn-glycerol + CoA. The catalysed reaction is all-trans-retinol + an acyl-CoA = an all-trans-retinyl ester + CoA. The enzyme catalyses 2-(9Z-octadecenoyl)-glycerol + (9Z)-octadecenoyl-CoA = 1,2-di-(9Z-octadecenoyl)-sn-glycerol + CoA. It catalyses the reaction 1,2-di-(9Z-octadecenoyl)-sn-glycerol + (9Z)-octadecenoyl-CoA = 1,2,3-tri-(9Z-octadecenoyl)-glycerol + CoA. It carries out the reaction all-trans-retinol + hexadecanoyl-CoA = all-trans-retinyl hexadecanoate + CoA. The catalysed reaction is 1-O-(9Z-octadecenyl)-glycerol + (9Z)-octadecenoyl-CoA = 1-O-(9Z-octadecyl)-3-(9Z-octadecenoyl)-glycerol + CoA. The enzyme catalyses 1-O-(9Z-octadecyl)-3-(9Z-octadecenoyl)-glycerol + (9Z)-octadecenoyl-CoA = 1-O-(9Z-octadecenyl)-2,3-di-(9Z-octadecenoyl)glycerol + CoA. It catalyses the reaction 1-(9Z-octadecenoyl)-glycerol + (9Z)-octadecenoyl-CoA = 1,2-di-(9Z-octadecenoyl)-glycerol + CoA. It carries out the reaction 1,2-di-(9Z-octadecenoyl)-glycerol + (9Z)-octadecenoate + H(+) = 1,2,3-tri-(9Z-octadecenoyl)-glycerol + H2O. The catalysed reaction is 1-octadecanoyl-2-(5Z,8Z,11Z,14Z-eicosatetraenoyl)-sn-glycerol + (9Z)-octadecenoyl-CoA = 1-octadecanoyl-2-(5Z,8Z,11Z,14Z)-eicosatetraenoyl-3-(9Z)-octadecenoyl-sn-glycerol + CoA. The enzyme catalyses hexadecane-1,2-diol + 2 hexadecanoyl-CoA = 1,2-O,O-dihexadecanoyl-1,2-hexadecanediol + 2 CoA. It catalyses the reaction hexadecane-1,2-diol + hexadecanoyl-CoA = 2-hydroxyhexadecyl hexadecanoate + CoA. It carries out the reaction 2-(9Z-octadecenoyl)-glycerol + hexadecanoyl-CoA = 1-hexadecanoyl-2-(9Z-octadecenoyl)-sn-glycerol + CoA. The catalysed reaction is 1,2-di-(9Z-octadecenoyl)-sn-glycerol + hexadecanoyl-CoA = 1,2-di-(9Z)-octadecenoyl-3-hexadecanoyl-sn-glycerol + CoA. The enzyme catalyses hexadecan-1-ol + hexadecanoyl-CoA = hexadecanyl hexadecanoate + CoA. It catalyses the reaction 13-cis-retinol + hexadecanoyl-CoA = 13-cis-retinyl hexadecanoate + CoA. It carries out the reaction 1,3-di-(9Z-octadecenoyl)-glycerol + (9Z)-octadecenoyl-CoA = 1,2,3-tri-(9Z-octadecenoyl)-glycerol + CoA. The catalysed reaction is 2,3-di-(9Z)-octadecenoyl-sn-glycerol + (9Z)-octadecenoyl-CoA = 1,2,3-tri-(9Z-octadecenoyl)-glycerol + CoA. It functions in the pathway lipid metabolism; glycerolipid metabolism. In terms of biological role, catalyzes the terminal and only committed step in triacylglycerol synthesis by using diacylglycerol and fatty acyl CoA as substrates. Highly expressed in epithelial cells of the small intestine and its activity is essential for the absorption of dietary fats. In liver, plays a role in esterifying exogenous fatty acids to glycerol, and is required to synthesize fat for storage. Also present in female mammary glands, where it produces fat in the milk. May be involved in VLDL (very low density lipoprotein) assembly. In contrast to DGAT2 it is not essential for survival. Functions as the major acyl-CoA retinol acyltransferase (ARAT) in the skin, where it acts to maintain retinoid homeostasis and prevent retinoid toxicity leading to skin and hair disorders. Exhibits additional acyltransferase activities, includin acyl CoA:monoacylglycerol acyltransferase (MGAT), wax monoester and wax diester synthases. Also able to use 1-monoalkylglycerol (1-MAkG) as an acyl acceptor for the synthesis of monoalkyl-monoacylglycerol (MAMAG). The protein is Diacylglycerol O-acyltransferase 1 (DGAT1) of Chlorocebus aethiops (Green monkey).